Consider the following 262-residue polypeptide: Tritrans,polycis-undecaprenyl-diphosphate synthase (GGDP specific) (262 aa).

Aspartate 40 is a catalytic residue. Aspartate 40 contributes to the Mg(2+) binding site. Substrate is bound by residues glycine 41–arginine 44, tryptophan 45, and serine 85–glutamate 87. Asparagine 88 acts as the Proton acceptor in catalysis. Residues arginine 92, arginine 211, and arginine 217–serine 219 contribute to the substrate site. Glutamate 230 contributes to the Mg(2+) binding site.

Belongs to the UPP synthase family. As to quaternary structure, homodimer. Mg(2+) is required as a cofactor.

It catalyses the reaction geranylgeranyl diphosphate + 7 isopentenyl diphosphate = tri-trans,hepta-cis-undecaprenyl diphosphate + 7 diphosphate. Functionally, generates tritrans,heptacis-undecaprenyl diphosphate from isopentenyl pyrophosphate (IPP) and geranylgeranyl diphosphate. It is probably the precursor of glycosyl carrier lipids. The polypeptide is Tritrans,polycis-undecaprenyl-diphosphate synthase (GGDP specific) (uppS) (Sulfolobus acidocaldarius (strain ATCC 33909 / DSM 639 / JCM 8929 / NBRC 15157 / NCIMB 11770)).